A 376-amino-acid polypeptide reads, in one-letter code: Alpha-ketoglutarate-dependent dioxygenase esdpJ (376 aa).

2 residues coordinate Fe cation: His145 and Asp147. Residue Thr202 participates in 2-oxoglutarate binding. The segment at 234-260 (YNQSSQEKKSEIHVEPRGSPNNVGSDL) is disordered. Residues 239–249 (QEKKSEIHVEP) show a composition bias toward basic and acidic residues. His335 lines the Fe cation pocket. Residues Arg347 and Arg351 each coordinate 2-oxoglutarate. Residues 354 to 376 (GVGEQPYLDPESKTRREALGEFN) form a disordered region. Over residues 363–376 (PESKTRREALGEFN) the composition is skewed to basic and acidic residues.

Belongs to the TfdA dioxygenase family. It depends on Fe(2+) as a cofactor.

Alpha-ketoglutarate-dependent dioxygenas; part of the cluster that mediates the biosynthesis of shearones, diterpenoid pyrones (DPs) which are structurally diverse meroterpenoids consisting of a diterpene linked by a pyrone, and which may exhibit a range of bioactivities. The alpha-ketoglutarate-dependent dioxygenase esdpJ seems not to be involved in this pathway. The molecular scaffold is commonly biosynthesized by a series of enzymes including the non-reducing polyketide synthase (NR-PKS) esdpA that generates an alpha-pyrone; the prenyltransferase esdpC that attaches a geranylgeranyl pyrophosphate (GGPP) produced by the GGPP synthase (GGPPS) esdpD onto the pyrone unit; the FAD-dependent monooxygenase esdpE that converts an olefin on the diterpene unit into an epoxide; and the terpene cyclase esdpB that catalyzes the cyclization reactions to give the molecular backbone shearone A. In the modification steps, esdpF oxidizes the hydroxy group to a ketone at C-3 and esdpG then attaches hydroxy groups at both C-11 and C-12. After that, esdpI hydroxylates at C-20 and esdpH hydroxylates at C-6'. The ether bridge is generated by nucleophilic attack of the hydroxy group at C-20 to the carbonyl carbon at C-3. EsdpH can also functions prior to esdpI. The different combinations of these modification enzymes lead to the production of diverse shearone derivatives, shearone I being the end product of the pathway. The sequence is that of Alpha-ketoglutarate-dependent dioxygenase esdpJ from Penicillium shearii (Eupenicillium shearii).